Reading from the N-terminus, the 429-residue chain is Ribosomal RNA small subunit methyltransferase B (429 aa).

Residues cysteine 254–lysine 260, aspartate 277, aspartate 303, and aspartate 322 contribute to the S-adenosyl-L-methionine site. Cysteine 375 acts as the Nucleophile in catalysis.

It belongs to the class I-like SAM-binding methyltransferase superfamily. RsmB/NOP family.

It is found in the cytoplasm. The catalysed reaction is cytidine(967) in 16S rRNA + S-adenosyl-L-methionine = 5-methylcytidine(967) in 16S rRNA + S-adenosyl-L-homocysteine + H(+). In terms of biological role, specifically methylates the cytosine at position 967 (m5C967) of 16S rRNA. The protein is Ribosomal RNA small subunit methyltransferase B of Escherichia coli O6:K15:H31 (strain 536 / UPEC).